Reading from the N-terminus, the 376-residue chain is Nuclear egress protein 1 (376 aa).

Ser-19 carries the post-translational modification Phosphoserine. The tract at residues 22–57 is disordered; the sequence is RKRRQRELASKVASTVNGATSANNHGEPPSPADARP. A compositionally biased stretch (polar residues) spans 33–45; sequence VASTVNGATSANN. A CCCH-type zinc finger spans residues 106–211; that stretch reads CLDISPYGNE…HVIFENSDVH (106 aa). The tract at residues 316-376 is disordered; it reads VVSTNGCGPS…PLFLNSIRAP (61 aa). Over residues 317–332 the composition is skewed to polar residues; that stretch reads VSTNGCGPSSSSQSTP.

Belongs to the herpesviridae NEC1 protein family. Forms a heterohexameric complex with NEC2. Interacts with capsid vertex specific component 2/CVC2; this interaction directs the capsid to the host inner nuclear membrane to initiate budding. Post-translationally, phosphorylated at serine residues in the N-terminus. This phosphorylation regulates the localization within the inner nuclear membrane. Phosphorylation by viral kinase UL97 at Ser-19 plays an important role for correct viral nuclear egress complex (NEC) localization.

The protein localises to the host nucleus inner membrane. Functionally, plays an essential role in virion nuclear egress, the first step of virion release from infected cell. Within the host nucleus, NEC1 interacts with the newly formed capsid through the vertexes and directs it to the inner nuclear membrane by associating with NEC2. Induces the budding of the capsid at the inner nuclear membrane as well as its envelopment into the perinuclear space. There, the NEC1/NEC2 complex promotes the fusion of the enveloped capsid with the outer nuclear membrane and the subsequent release of the viral capsid into the cytoplasm where it will reach the secondary budding sites in the host Golgi or trans-Golgi network. This chain is Nuclear egress protein 1, found in Homo sapiens (Human).